Consider the following 32-residue polypeptide: Fimbrin sef21 (32 aa).

The protein resides in the fimbrium. In Salmonella enteritidis, this protein is Fimbrin sef21.